We begin with the raw amino-acid sequence, 134 residues long: Small ribosomal subunit protein uS9 (134 aa).

Residues Asp-109–Arg-134 form a disordered region. A compositionally biased stretch (basic residues) spans Pro-118 to Arg-134.

This sequence belongs to the universal ribosomal protein uS9 family.

This is Small ribosomal subunit protein uS9 from Methanococcus aeolicus (strain ATCC BAA-1280 / DSM 17508 / OCM 812 / Nankai-3).